A 399-amino-acid chain; its full sequence is Elongation factor Tu (399 aa).

Residues 10 to 209 (NPHVNIGTIG…EVDSYIPTPE (200 aa)) enclose the tr-type G domain. Residues 19-26 (GHVYHGKT) are G1. Residue 19-26 (GHVYHGKT) participates in GTP binding. A Mg(2+)-binding site is contributed by threonine 26. The segment at 60-64 (GITIA) is G2. Residues 81–84 (DCPG) are G3. GTP contacts are provided by residues 81-85 (DCPGH) and 136-139 (NKQD). Residues 136-139 (NKQD) are G4. The tract at residues 174–176 (SAL) is G5.

It belongs to the TRAFAC class translation factor GTPase superfamily. Classic translation factor GTPase family. EF-Tu/EF-1A subfamily. As to quaternary structure, monomer.

Its subcellular location is the cytoplasm. It catalyses the reaction GTP + H2O = GDP + phosphate + H(+). Its function is as follows. GTP hydrolase that promotes the GTP-dependent binding of aminoacyl-tRNA to the A-site of ribosomes during protein biosynthesis. This is Elongation factor Tu from Helicobacter pylori (strain J99 / ATCC 700824) (Campylobacter pylori J99).